The following is a 300-amino-acid chain: Ribosomal RNA small subunit methyltransferase H (300 aa).

S-adenosyl-L-methionine is bound by residues 46 to 48 (GGH), Asp-65, Phe-92, Asp-107, and Gln-114.

The protein belongs to the methyltransferase superfamily. RsmH family.

Its subcellular location is the cytoplasm. It catalyses the reaction cytidine(1402) in 16S rRNA + S-adenosyl-L-methionine = N(4)-methylcytidine(1402) in 16S rRNA + S-adenosyl-L-homocysteine + H(+). Specifically methylates the N4 position of cytidine in position 1402 (C1402) of 16S rRNA. This is Ribosomal RNA small subunit methyltransferase H from Prochlorococcus marinus (strain MIT 9215).